The sequence spans 229 residues: Putative N-acetylmannosamine-6-phosphate 2-epimerase (229 aa).

Belongs to the NanE family.

The enzyme catalyses an N-acyl-D-glucosamine 6-phosphate = an N-acyl-D-mannosamine 6-phosphate. Its pathway is amino-sugar metabolism; N-acetylneuraminate degradation; D-fructose 6-phosphate from N-acetylneuraminate: step 3/5. In terms of biological role, converts N-acetylmannosamine-6-phosphate (ManNAc-6-P) to N-acetylglucosamine-6-phosphate (GlcNAc-6-P). The chain is Putative N-acetylmannosamine-6-phosphate 2-epimerase from Actinobacillus pleuropneumoniae serotype 5b (strain L20).